Reading from the N-terminus, the 467-residue chain is ATP synthase subunit beta (467 aa).

153–160 serves as a coordination point for ATP; the sequence is GGAGVGKT.

The protein belongs to the ATPase alpha/beta chains family. F-type ATPases have 2 components, CF(1) - the catalytic core - and CF(0) - the membrane proton channel. CF(1) has five subunits: alpha(3), beta(3), gamma(1), delta(1), epsilon(1). CF(0) has three main subunits: a(1), b(2) and c(9-12). The alpha and beta chains form an alternating ring which encloses part of the gamma chain. CF(1) is attached to CF(0) by a central stalk formed by the gamma and epsilon chains, while a peripheral stalk is formed by the delta and b chains.

The protein resides in the cell membrane. It catalyses the reaction ATP + H2O + 4 H(+)(in) = ADP + phosphate + 5 H(+)(out). Its function is as follows. Produces ATP from ADP in the presence of a proton gradient across the membrane. The catalytic sites are hosted primarily by the beta subunits. The chain is ATP synthase subunit beta from Lactiplantibacillus plantarum (strain ATCC BAA-793 / NCIMB 8826 / WCFS1) (Lactobacillus plantarum).